We begin with the raw amino-acid sequence, 310 residues long: MARTEGDTWDIVTSVGATALVVSAMRAIEARKPEPLARDDYAQHFVAATKAEAPLFSELLEDPEAAQAPDIQLFSSYLGARTKYFDEFFLTAGNAGVRQAVILAAGLDVRGYRLPWAAGTTVYELDLPKVLEFKKQVLDEHNARATATVLDLHVDLRDDWPTVLKAAGFDPAQPTAWLAEGLLPFLPGAAQDLLFERIADLSAPGSRVAVEDFGAPGNQADRMSNAMQNEEGALQRIFKSIVEEDAPPSSLWFGDEREDPARWLTGHGWTVEATTAGELLKRYNRVPLAGEHELTDAMGQSRYFTAVLGA.

S-adenosyl-L-methionine contacts are provided by residues aspartate 126 and 155 to 156; that span reads DL.

The protein belongs to the UPF0677 family.

Functionally, exhibits S-adenosyl-L-methionine-dependent methyltransferase activity. The protein is Putative S-adenosyl-L-methionine-dependent methyltransferase MAB_4587c of Mycobacteroides abscessus (strain ATCC 19977 / DSM 44196 / CCUG 20993 / CIP 104536 / JCM 13569 / NCTC 13031 / TMC 1543 / L948) (Mycobacterium abscessus).